The sequence spans 104 residues: Large ribosomal subunit protein uL24 (104 aa).

The protein belongs to the universal ribosomal protein uL24 family. Part of the 50S ribosomal subunit.

One of two assembly initiator proteins, it binds directly to the 5'-end of the 23S rRNA, where it nucleates assembly of the 50S subunit. In terms of biological role, one of the proteins that surrounds the polypeptide exit tunnel on the outside of the subunit. In Pseudomonas fluorescens (strain SBW25), this protein is Large ribosomal subunit protein uL24.